Reading from the N-terminus, the 365-residue chain is Formamidopyrimidine-DNA glycosylase (365 aa).

Residue P2 is the Schiff-base intermediate with DNA of the active site. E3 functions as the Proton donor in the catalytic mechanism. The Proton donor; for beta-elimination activity role is filled by K61. The disordered stretch occupies residues 121–150 (RGRLAGHGDGMDGTSRTGSTLPGTGGTENS). Polar residues predominate over residues 134-150 (TSRTGSTLPGTGGTENS). H186, R205, and R246 together coordinate DNA. The FPG-type zinc-finger motif lies at 331–365 (RVYGRGGQPCRHCGTTLATAQVAGRTTVFCPQCQR). The Proton donor; for delta-elimination activity role is filled by R355.

Belongs to the FPG family. As to quaternary structure, monomer. The cofactor is Zn(2+).

The catalysed reaction is Hydrolysis of DNA containing ring-opened 7-methylguanine residues, releasing 2,6-diamino-4-hydroxy-5-(N-methyl)formamidopyrimidine.. It carries out the reaction 2'-deoxyribonucleotide-(2'-deoxyribose 5'-phosphate)-2'-deoxyribonucleotide-DNA = a 3'-end 2'-deoxyribonucleotide-(2,3-dehydro-2,3-deoxyribose 5'-phosphate)-DNA + a 5'-end 5'-phospho-2'-deoxyribonucleoside-DNA + H(+). Functionally, involved in base excision repair of DNA damaged by oxidation or by mutagenic agents. Acts as a DNA glycosylase that recognizes and removes damaged bases. Has a preference for oxidized purines, such as 7,8-dihydro-8-oxoguanine (8-oxoG). Has AP (apurinic/apyrimidinic) lyase activity and introduces nicks in the DNA strand. Cleaves the DNA backbone by beta-delta elimination to generate a single-strand break at the site of the removed base with both 3'- and 5'-phosphates. In Nitratidesulfovibrio vulgaris (strain ATCC 29579 / DSM 644 / CCUG 34227 / NCIMB 8303 / VKM B-1760 / Hildenborough) (Desulfovibrio vulgaris), this protein is Formamidopyrimidine-DNA glycosylase.